The primary structure comprises 213 residues: Uracil phosphoribosyltransferase (213 aa).

5-phospho-alpha-D-ribose 1-diphosphate-binding positions include arginine 77, arginine 102, and 129 to 137 (DPMLATGGS). Uracil-binding positions include isoleucine 198 and 203-205 (GDA). Position 204 (aspartate 204) interacts with 5-phospho-alpha-D-ribose 1-diphosphate.

The protein belongs to the UPRTase family. It depends on Mg(2+) as a cofactor.

It carries out the reaction UMP + diphosphate = 5-phospho-alpha-D-ribose 1-diphosphate + uracil. It participates in pyrimidine metabolism; UMP biosynthesis via salvage pathway; UMP from uracil: step 1/1. With respect to regulation, allosterically activated by GTP. Its function is as follows. Catalyzes the conversion of uracil and 5-phospho-alpha-D-ribose 1-diphosphate (PRPP) to UMP and diphosphate. The polypeptide is Uracil phosphoribosyltransferase (Mycobacteroides abscessus (strain ATCC 19977 / DSM 44196 / CCUG 20993 / CIP 104536 / JCM 13569 / NCTC 13031 / TMC 1543 / L948) (Mycobacterium abscessus)).